Consider the following 103-residue polypeptide: Protein S100-A16 (103 aa).

In terms of domain architecture, EF-hand 1; degenerate spans 12-47 (VIVLVENFYKYVSKYSLVKNKISKSSFREMLQKELN). An EF-hand 2 domain is found at 54-89 (GNRKAADKLIQNLDANHDGRISFDEYWTLIGGITGP). Ca(2+) is bound by residues aspartate 67, asparagine 69, aspartate 71, arginine 73, and glutamate 78.

It belongs to the S-100 family. In terms of assembly, homodimer. Interacts with TP53. In terms of tissue distribution, ubiquitous. Highly expressed in esophagus, adipose tissues and colon. Expressed at lower level in lung, brain, pancreas and skeletal muscle. Expression is up-regulated in tumors of bladder, lung, thyroid gland, pancreas and ovary. Expressed in astrocytes.

Its subcellular location is the nucleus. The protein resides in the nucleolus. It localises to the cytoplasm. In terms of biological role, calcium-binding protein. Binds one calcium ion per monomer. Can promote differentiation of adipocytes (in vitro). Overexpression in preadipocytes increases their proliferation, enhances adipogenesis and reduces insulin-stimulated glucose uptake. In Homo sapiens (Human), this protein is Protein S100-A16.